The primary structure comprises 109 residues: U4-lycotoxin-Ls1b (109 aa).

The N-terminal stretch at 1–22 (MKVLVLFSVLFLTLFSYSSTEA) is a signal peptide. Residues 23-44 (IDEFDSDAEDDMLSLMANEQVR) constitute a propeptide that is removed on maturation. Residues 45–88 (AKACTPRLHDCSHDRHSCCRGELSKDVCYCFYPEGEDKTEVCSC) form a knottin domain region. Disulfide bonds link C48–C63, C55–C72, C62–C88, and C74–C86. The segment at 89 to 108 (QQPKSHKYIEKVVDKAKTVV) is linear cationic cytotoxin domain.

It belongs to the neurotoxin 19 (CSTX) family. 05 (U4-Lctx) subfamily. Expressed by the venom gland.

The protein resides in the secreted. Functionally, enhances the high-affinity desensitization of human P2RX3 purinoceptors. The chain is U4-lycotoxin-Ls1b from Lycosa singoriensis (Wolf spider).